The sequence spans 263 residues: HTH-type transcriptional repressor NanR (263 aa).

The HTH gntR-type domain maps to 30–98 (KKLSEMVEEE…NGERARVSRP (69 aa)). Residues 58–77 (ERELMAFFNVGRPSVREALA) constitute a DNA-binding region (H-T-H motif).

It belongs to the NanR family.

Transcriptional repressor that controls expression of the genes required for the catabolism of sialic acids. The chain is HTH-type transcriptional repressor NanR from Salmonella bongori (strain ATCC 43975 / DSM 13772 / NCTC 12419).